The chain runs to 212 residues: Small ribosomal subunit protein eS6 (212 aa).

This sequence belongs to the eukaryotic ribosomal protein eS6 family.

In Metallosphaera sedula (strain ATCC 51363 / DSM 5348 / JCM 9185 / NBRC 15509 / TH2), this protein is Small ribosomal subunit protein eS6.